We begin with the raw amino-acid sequence, 724 residues long: Cyclin-T1 (724 aa).

Ser-117 bears the Phosphoserine mark. Residues 253-270 carry the Nuclear localization signal motif; the sequence is KRIRNWRAYQAAMKTKPD. Lys-342 is covalently cross-linked (Glycyl lysine isopeptide (Lys-Gly) (interchain with G-Cter in SUMO2)). The stretch at 384–425 forms a coiled coil; that stretch reads SAKVSLKEYRAKHAEELAAQKRQLENMEANVKSQYAYAAQNL. Ser-388 carries the phosphoserine modification. Lys-390 bears the N6-acetyllysine mark. A Glycyl lysine isopeptide (Lys-Gly) (interchain with G-Cter in SUMO2) cross-link involves residue Lys-415. Ser-416, Ser-473, and Ser-474 each carry ADP-ribosylserine. Residues 479-549 form a histidine-rich domain (HRD) region; the sequence is IKMRIKVHSA…RPSDPKHSSQ (71 aa). Lys-480 participates in a covalent cross-link: Glycyl lysine isopeptide (Lys-Gly) (interchain with G-Cter in SUMO2). The span at 483 to 507 shows a compositional bias: basic and acidic residues; sequence IKVHSAGDKHNSIEDSVTKSREHKE. Disordered regions lie at residues 483–586 and 691–724; these read IKVH…VFDH and PRAG…PLPK. The residue at position 484 (Lys-484) is an N6-(ADP-ribosyl)lysine. An ADP-ribosylhistidine modification is found at His-486. Ser-494 and Ser-498 each carry phosphoserine. Residues 508-529 show a composition bias toward basic residues; it reads KQRTHPSNHHHHHNHHSHRHSH. His-529 is subject to ADP-ribosylhistidine. An ADP-ribosylserine mark is found at Ser-548 and Ser-551. His-555 carries the ADP-ribosylhistidine modification. A compositionally biased stretch (low complexity) spans 559–569; sequence SLSSTLSSSSS. Ser-562 is subject to ADP-ribosylserine. Residues 708 to 724 are compositionally biased toward pro residues; sequence PPPLPSEPPPPLPPLPK.

This sequence belongs to the cyclin family. Cyclin C subfamily. In terms of assembly, cyclin-T1 is the predominant cyclin that associates with CDK9 to form a heterodimer called P-TEFb. P-TEFb forms a complex with AFF4/AF5Q31. Component of a complex which is at least composed of HTATSF1/Tat-SF1, P-TEFb complex, RNA pol II, SUPT5H, and NCL/nucleolin. Component of the 7SK snRNP complex at least composed of P-TEFb (composed of CDK9 and CCNT1/cyclin-T1), HEXIM1, HEXIM2, BCDIN3, SART3 proteins and 7SK and U6 snRNAs. Interacts (via central region) with ZMYND8 (via N-terminus); the interaction is direct and the association appears to occur between homodimeric ZMYND8 and the activated form of the P-TEFb complex. Interacts with BRD4, targets chromatin binding. Interacts with JMJD6. Interacts with MDFIC. Interacts with HSF1. Interacts with HTATSF1. Interacts with TBX21. ADP-ribosylation on serine residues by PARP1 in response to DNA damage disrupts the phase separation activity of CCNT1, thereby preventing activation of CDK9.

The protein resides in the nucleus. Regulatory subunit of the cyclin-dependent kinase pair (CDK9/cyclin-T1) complex, also called positive transcription elongation factor B (P-TEFb), which facilitates the transition from abortive to productive elongation by phosphorylating the CTD (C-terminal domain) of the large subunit of RNA polymerase II (RNA Pol II). Required to activate the protein kinase activity of CDK9: acts by mediating formation of liquid-liquid phase separation (LLPS) that enhances binding of P-TEFb to the CTD of RNA Pol II. This is Cyclin-T1 (Ccnt1) from Mus musculus (Mouse).